Reading from the N-terminus, the 501-residue chain is Dye-decolorizing peroxidase (501 aa).

The signal sequence occupies residues 1 to 21 (MRLSPSFLSLALVIFVGEVVA). Positions 22-60 (RNVVARASNPASVTGTRKVSLLKNVAGLPAVPTAQQVAV) are excised as a propeptide. Aspartate 228 acts as the Proton acceptor in catalysis. Asparagine 352 is a glycosylation site (N-linked (GlcNAc...) asparagine). Histidine 367 lines the heme pocket. Asparagine 403 carries N-linked (GlcNAc...) asparagine glycosylation.

It belongs to the DyP-type peroxidase family. Heme b is required as a cofactor.

It is found in the secreted. It catalyses the reaction Reactive Blue 5 + 2 H2O2 = 2,2'-disulfonyl azobenzene + 3-[(4-amino-6-chloro-1,3,5-triazin-2-yl)amino]benzenesulfonate + phthalate + 2 H2O + 2 H(+). The catalysed reaction is 2 a phenolic donor + H2O2 = 2 a phenolic radical donor + 2 H2O. Functionally, manganese-independent peroxidase that is able to convert a large number of compounds, but its physiological substrate is not known. In addition to classic peroxidase substrates (e.g. 2,6-dimethoxyphenol), oxidizes dyes such as Reactive Blue 5 and Reactive Black 5. In Exidia glandulosa (Black witch's butter), this protein is Dye-decolorizing peroxidase.